We begin with the raw amino-acid sequence, 719 residues long: Fatty acid oxidation complex subunit alpha (719 aa).

The enoyl-CoA hydratase/isomerase stretch occupies residues 1-190 (MIYQGNRITV…KLGLVDAVVA (190 aa)). Asp298 contacts substrate. Positions 313 to 719 (HDINEAAVLG…AAGETFYPKA (407 aa)) are 3-hydroxyacyl-CoA dehydrogenase. NAD(+) contacts are provided by residues Met326, Asp345, 402–404 (VVE), Lys409, and Ser431. Residue His452 is the For 3-hydroxyacyl-CoA dehydrogenase activity of the active site. Asn455 contributes to the NAD(+) binding site. Asn502 serves as a coordination point for substrate.

This sequence in the N-terminal section; belongs to the enoyl-CoA hydratase/isomerase family. The protein in the C-terminal section; belongs to the 3-hydroxyacyl-CoA dehydrogenase family. As to quaternary structure, heterotetramer of two alpha chains (FadB) and two beta chains (FadA).

The enzyme catalyses a (3S)-3-hydroxyacyl-CoA + NAD(+) = a 3-oxoacyl-CoA + NADH + H(+). It carries out the reaction a (3S)-3-hydroxyacyl-CoA = a (2E)-enoyl-CoA + H2O. It catalyses the reaction a 4-saturated-(3S)-3-hydroxyacyl-CoA = a (3E)-enoyl-CoA + H2O. The catalysed reaction is (3S)-3-hydroxybutanoyl-CoA = (3R)-3-hydroxybutanoyl-CoA. The enzyme catalyses a (3Z)-enoyl-CoA = a 4-saturated (2E)-enoyl-CoA. It carries out the reaction a (3E)-enoyl-CoA = a 4-saturated (2E)-enoyl-CoA. The protein operates within lipid metabolism; fatty acid beta-oxidation. In terms of biological role, involved in the aerobic and anaerobic degradation of long-chain fatty acids via beta-oxidation cycle. Catalyzes the formation of 3-oxoacyl-CoA from enoyl-CoA via L-3-hydroxyacyl-CoA. It can also use D-3-hydroxyacyl-CoA and cis-3-enoyl-CoA as substrate. The polypeptide is Fatty acid oxidation complex subunit alpha (Psychrobacter sp. (strain PRwf-1)).